Here is a 522-residue protein sequence, read N- to C-terminus: MAGGSLAPAGVAKERAEQYQGKVTFAVFVACMVAAVGGSIFGYDIGISGGVISMDAFLEKFFRSVYLKKKHAHENNYCKYDDQRLAAFTSSLYLAGLAASLVAGPITRIYGRRASIISGGISFLIGAALNATAINLAMLLLGRIMLGVGIGFGNQAVPLYLSEMAPTHLRGGLNIMFQLATTSGIFTANMVNYGTHKLESWGWRLSLGLAAAPALLMTIGGLLLPETPNSLIEQGLHEKGRNVLEKIRGTKHVDAEFQDMLDASELANSIKHPFRNILEKRNRPQLVMAIFMPTFQILTGINIILFYAPPLFQSMGFGGNAALYSSAVTGAVLCSSTFISIATVDRLGRRFLLISGGIQMITCQVIVAIILGVKFGDNQQLSKSFSVLVVIMICLFVLAFGWSWGPLGWTVPSEIFPLETRSAGQSITVAVNLFFTFVIAQSFPSLLCAFKFGIFLFFAGWVTVMTAFVYIFLPETKGVPIEEMIFLWRKHWFWKKIVPGQPEVDDSRESMEMGEAVASRIK.

Residues 1 to 22 (MAGGSLAPAGVAKERAEQYQGK) are Cytoplasmic-facing. 12 helical membrane-spanning segments follow: residues 23 to 43 (VTFA…IFGY), 87 to 107 (AFTS…GPIT), 121 to 141 (ISFL…MLLL), 144 to 164 (IMLG…LSEM), 173 to 193 (LNIM…MVNY), 205 to 225 (LSLG…LLLP), 286 to 306 (LVMA…IILF), 322 to 342 (ALYS…ISIA), 351 to 371 (FLLI…AIIL), 384 to 404 (SFSV…GWSW), 430 to 450 (AVNL…LCAF), and 453 to 473 (GIFL…YIFL). The Cytoplasmic segment spans residues 474–522 (PETKGVPIEEMIFLWRKHWFWKKIVPGQPEVDDSRESMEMGEAVASRIK).

It belongs to the major facilitator superfamily. Sugar transporter (TC 2.A.1.1) family.

It localises to the membrane. This chain is Sugar carrier protein A (STA), found in Ricinus communis (Castor bean).